The following is a 571-amino-acid chain: DM7 family protein CG15332 (571 aa).

Residues 440–472 (TRDDGINTADYQSQFPELEPEPEPEPEDEGEDV) are disordered. The span at 457 to 471 (LEPEPEPEPEDEGED) shows a compositional bias: acidic residues.

It belongs to the DM7 family.

This chain is DM7 family protein CG15332, found in Drosophila melanogaster (Fruit fly).